The sequence spans 268 residues: Cell division cycle-associated protein 3 (268 aa).

Disordered stretches follow at residues 1 to 232 (MGSA…SELK) and 247 to 268 (GRAWEQGQDHDKENQHFPLVES). Phosphoserine is present on residues Ser-29 and Ser-31. Phosphothreonine is present on Thr-37. Phosphoserine is present on residues Ser-44, Ser-64, and Ser-68. The span at 56–66 (EGLKHAQDSDP) shows a compositional bias: basic and acidic residues. Thr-76 carries the phosphothreonine modification. Ser-87 and Ser-94 each carry phosphoserine. Residues 91 to 120 (KQLSEVFETEDSKSNLPPEPVLPPEAPLSS) form an F-box-like region. A compositionally biased stretch (pro residues) spans 107-116 (PPEPVLPPEA). The span at 117–126 (PLSSELDLPL) shows a compositional bias: low complexity. 3 stretches are compositionally biased toward polar residues: residues 128-149 (TQLSVEEQMPPWNQTEFPSKQV), 158-169 (PTETPVASQSSD), and 178-194 (PRSSGSMRNRWKPNSSK). A Phosphoserine modification is found at Ser-199. Thr-202 bears the Phosphothreonine mark. A compositionally biased stretch (polar residues) spans 205–215 (QDDNSPGTLTL). Phosphoserine is present on Ser-209. At Thr-212 the chain carries Phosphothreonine. The short motif at 258–260 (KEN) is the KEN box element.

In terms of assembly, interacts with SKP1. Part of a SCF (SKP1-cullin-F-box) protein ligase complex. Ubiquitinated and degraded by the APC/C-Cdh1 complex.

The protein resides in the cytoplasm. It is found in the cytosol. It participates in protein modification; protein ubiquitination. F-box-like protein which is required for entry into mitosis. Acts by participating in E3 ligase complexes that mediate the ubiquitination and degradation of WEE1 kinase at G2/M phase. In Homo sapiens (Human), this protein is Cell division cycle-associated protein 3 (CDCA3).